We begin with the raw amino-acid sequence, 514 residues long: Cytochrome bd-II ubiquinol oxidase subunit 1 (514 aa).

Over 1-22 (MWDVIDLSRWQFALTALYHFLF) the chain is Cytoplasmic. Histidine 19 is a heme binding site. Residues 23 to 42 (VPLTLGLIFLLAIMETIYVV) form a helical membrane-spanning segment. The Periplasmic segment spans residues 43–94 (TGKTIYRDMTRFWGKLFGINFALGVATGLTMEFQFGTNWSFYSNYVGDIFGA). A helical membrane pass occupies residues 95–114 (PLAMEALMAFFLESTFVGLF). Residues 115–129 (FFGWQRLNKYQHLLV) lie on the Cytoplasmic side of the membrane. Residues 130–149 (TWLVAFGSNLSALWILNANG) traverse the membrane as a helical segment. Residues 150-187 (WMQYPTGAHFDIDTLRMEMTSFSELVFNPVSQVKFVHT) are Periplasmic-facing. Position 186 (histidine 186) interacts with heme. Residues 188-207 (VMAGYVTGAMFIMAISAWYL) traverse the membrane as a helical segment. Residues 208–219 (LRGRERNVALRS) are Cytoplasmic-facing. A helical membrane pass occupies residues 220–239 (FAIGSVFGTLAIIGTLQLGD). Residues 240–392 (SSAYEVAQVQ…VAPVFWSFRI (153 aa)) lie on the Periplasmic side of the membrane. Heme is bound at residue methionine 393. The chain crosses the membrane as a helical span at residues 393 to 412 (MVGCGSLLLLVMLIALVQTL). Residues 413 to 470 (RGKIDQHRWVLKMALWSLPLPWIAIEAGWFMTEFGRQPWAIQDILPTYSAHSALTTGQ) lie on the Cytoplasmic side of the membrane. A helical transmembrane segment spans residues 471-490 (LAFSLIMIVGLYTLFLIAEV). The Periplasmic portion of the chain corresponds to 491–514 (YLMQKYARLGPSAMQSEQPTQQQG).

It belongs to the cytochrome ubiquinol oxidase subunit 1 family. Heterodimer of subunits I and II. The cofactor is heme. In terms of processing, the N-terminus is blocked.

It localises to the cell inner membrane. The catalysed reaction is 2 a ubiquinol + O2 + n H(+)(in) = 2 a ubiquinone + 2 H2O + n H(+)(out). The protein operates within energy metabolism; oxidative phosphorylation. With respect to regulation, inhibited by cyanide; is more sensitive to cyanide than cytochrome bd-I oxidase. In terms of biological role, a terminal oxidase that catalyzes quinol-dependent, Na(+)-independent oxygen uptake. Prefers menadiol over other quinols although ubiquinol was not tested. Generates a proton motive force using protons and electrons from opposite sides of the membrane to generate H(2)O, transferring 1 proton/electron. The sequence is that of Cytochrome bd-II ubiquinol oxidase subunit 1 (appC) from Escherichia coli (strain K12).